The chain runs to 140 residues: Large ribosomal subunit protein uL11 (140 aa).

Belongs to the universal ribosomal protein uL11 family. In terms of assembly, part of the ribosomal stalk of the 50S ribosomal subunit. Interacts with L10 and the large rRNA to form the base of the stalk. L10 forms an elongated spine to which L12 dimers bind in a sequential fashion forming a multimeric L10(L12)X complex. In terms of processing, one or more lysine residues are methylated.

In terms of biological role, forms part of the ribosomal stalk which helps the ribosome interact with GTP-bound translation factors. The protein is Large ribosomal subunit protein uL11 of Karelsulcia muelleri (strain GWSS) (Sulcia muelleri).